The sequence spans 434 residues: Glutamate-1-semialdehyde 2,1-aminomutase (434 aa).

N6-(pyridoxal phosphate)lysine is present on K274.

It belongs to the class-III pyridoxal-phosphate-dependent aminotransferase family. HemL subfamily. As to quaternary structure, homodimer. The cofactor is pyridoxal 5'-phosphate.

The protein resides in the cytoplasm. It catalyses the reaction (S)-4-amino-5-oxopentanoate = 5-aminolevulinate. It functions in the pathway porphyrin-containing compound metabolism; protoporphyrin-IX biosynthesis; 5-aminolevulinate from L-glutamyl-tRNA(Glu): step 2/2. This Acidovorax ebreus (strain TPSY) (Diaphorobacter sp. (strain TPSY)) protein is Glutamate-1-semialdehyde 2,1-aminomutase.